The primary structure comprises 488 residues: MVMQFQGLENPIQISLHHSHRLSGFVPEGMSVKPAKGMLTEHAAGPLGQNLDLESYSPYNNVPFPQVQPQISSSSYYSNLGFYPQQPEDWYSPGIYELRRMPAETGYQGETEVSEMPVTKKPRMAAASAGRIKGDELCVVCGDRASGYHYNALTCEGCKGFFRRSITKNAVYKCKNGGNCVMDMYMRRKCQECRLRKCKEMGMLAECMYTGLLTEIQCKSKRLRKNVKQHADQTANEDDSEGRDLRQVTSTTKFCREKTELTADQQTLLDYIMDSYNKQRMPQEITNKILKEEFSAEENFLILTEMATSHVQILVEFTKKLPGFQTLDHEDQIALLKGSAVEAMFLRSAEIFNKKLPAGHADLLEERIRKSGISDEYITPMFSFYKSVGELKMTQEEYALLTAIVILSPDRQYIKDREAVEKLQEPLLDVLQKLCKMYQPENPQHFACLLGRLTELRTFNHHHAEMLMSWRVNDHKFTPLLCEIWDVQ.

A Glycyl lysine isopeptide (Lys-Gly) (interchain with G-Cter in SUMO1) cross-link involves residue K133. Residues 135 to 210 (DELCVVCGDR…MGMLAECMYT (76 aa)) constitute a DNA-binding region (nuclear receptor). The segment at 138-158 (CVVCGDRASGYHYNALTCEGC) adopts an NR C4-type zinc-finger fold. S146 and S165 each carry phosphoserine; by PKC/PRKCA. K168 is subject to N6-acetyllysine; by EP300. Residues 174–198 (CKNGGNCVMDMYMRRKCQECRLRKC) form an NR C4-type zinc finger. Position 221 is an N6-methyllysine; by SETD7 (K221). K228 carries the post-translational modification N6-acetyllysine; by EP300. The 225-residue stretch at 264 to 488 (DQQTLLDYIM…PLLCEIWDVQ (225 aa)) folds into the NR LBD domain. K291 is covalently cross-linked (Glycyl lysine isopeptide (Lys-Gly) (interchain with G-Cter in SUMO1)). The chenodeoxycholate site is built by R347, Y377, and Y385. T458 carries the post-translational modification Phosphothreonine; by PKC/PRKCZ. H463 contributes to the chenodeoxycholate binding site.

It belongs to the nuclear hormone receptor family. NR1 subfamily. As to quaternary structure, heterodimer with RXRA; the heterodimerization enhances the binding affinity for LXXLL motifs from coactivators. Binds DNA predominantly as a heterodimer with RXRA. After activation by agonist binding interacts with coactivators. Interacts with PPARGC1A, SMARCA4 and EP300. Interacts with NCOA1, NCOA2, CARM1, SETD7, PRMT1, GPS2, SMARCA4 and MED1. Interacts with XRCC5 and XRCC6; decreasing NR1H4/FXR transactivation activity towards ABCB11/BSEP. Interacts with PAGR1 and NCOA6; indicative for an association with an MLL2/MLL3 complex (ASCOM). Interacts with NR5A2. Post-translationally, acetylated by EP300. Lys-228 as is the major acetylation site for EP300; the dynamicly regulated acetylation inhibits heterodimerization with RXRA and transactivation activity. Deacetylated by SIRT1. Elevated acetylation levels are found in metabolic disease states (mouse models of obesity and type II diabetes). In terms of processing, methylation may increase transactivation of target genes. Phosphorylation by PKC/PRKCA increases transactivation activity by promoting association with PPARGC1A. Post-translationally, sumoylated upon ligand binding. As to expression, expressed in liver and kidney. Expressed in pancreatic beta cells and macrophages. Expressed in the villus epithelium in adult ileum, with highest expression in the intervillus regions. Expression in colon is reduced by inflammation.

It is found in the nucleus. In terms of biological role, ligand-activated transcription factor. Receptor for bile acids (BAs) such as chenodeoxycholic acid (CDCA), lithocholic acid, deoxycholic acid (DCA) and allocholic acid (ACA). Plays a essential role in BA homeostasis through the regulation of genes involved in BA synthesis, conjugation and enterohepatic circulation. Also regulates lipid and glucose homeostasis and is involved in innate immune response. The FXR-RXR heterodimer binds predominantly to farnesoid X receptor response elements (FXREs) containing two inverted repeats of the consensus sequence 5'-AGGTCA-3' in which the monomers are spaced by 1 nucleotide (IR-1) but also to tandem repeat DR1 sites with lower affinity, and can be activated by either FXR or RXR-specific ligands. It is proposed that monomeric nuclear receptors such as NR5A2/LRH-1 bound to coregulatory nuclear responsive element (NRE) halfsites located in close proximity to FXREs modulate transcriptional activity. In the liver activates transcription of the corepressor NR0B2 thereby indirectly inhibiting CYP7A1 and CYP8B1 (involved in BA synthesis) implicating at least in part histone demethylase KDM1A resulting in epigenomic repression, and SLC10A1/NTCP (involved in hepatic uptake of conjugated BAs). Activates transcription of the repressor MAFG (involved in regulation of BA synthesis). Activates transcription of SLC27A5/BACS and BAAT (involved in BA conjugation), ABCB11/BSEP (involved in bile salt export) by directly recruiting histone methyltransferase CARM1, and ABCC2/MRP2 (involved in secretion of conjugated BAs) and ABCB4 (involved in secretion of phosphatidylcholine in the small intestine). In ileal enterocytes activates FABP6/IBABP (involved in cytosolic transport), SLC51A/OSTA and SLC51B/OSTB (involved in secretion of conjugated BAs to the portal blood), and repressor NR0B2/SHP thereby indirectly inhibiting SLC10A2/ASBT (involved in BA uptake). In the intestine activates FGF15 expression and secretion leading to hepatic CYP7A1 repression; the function also involves the coordinated induction of hepatic KLB/beta-klotho expression. Transcriptional activation of FABP6/IBAP and SCD1 but not of ABCB11 is isoform-specific. Regulates transcription of liver UGT2B4 and SULT2A1 involved in BA detoxification; binding to the UGT2B4 promoter seems to imply a monomeric transactivation independent of RXRA. Modulates lipid homeostasis by activating liver NR0B2/SHP-mediated repression of SREBF1 isoform SREBP-1C (involved in de novo lipogenesis), expression of PLTP (involved in HDL formation), SCARB1 (involved in HDL hepatic uptake), APOE, APOC1, APOC4, VLDLR and SDC1 (involved in the hepatic uptake of LDL and IDL remnants), and inhibiting expression of MTTP (involved in VLDL assembly). Increases expression of APOC2 (promoting lipoprotein lipase activity implicated in triglyceride clearance). Transrepresses APOA1 probably involving a monomeric competition with NR2A1 for binding to a DR1 element. Also reduces triglyceride clearance by inhibiting expression of ANGPTL3 and APOC3 (both involved in inhibition of lipoprotein lipase). Involved in glucose homeostasis by modulating hepatic gluconeogenesis through activation of NR0B2/SHP-mediated repression of respective genes. Modulates glycogen synthesis (inducing phosphorylation of glycogen synthase kinase-3). Modulates glucose-stimulated insulin secretion and is involved in insulin resistance. Involved in intestinal innate immunity. Plays a role in protecting the distal small intestine against bacterial overgrowth and preservation of the epithelial barrier. Down-regulates inflammatory cytokine expression in several types of immune cells including macrophages and mononuclear cells. Mediates transrepression of TLR4-induced cytokine expression; the function seems to require its sumoylation and prevents N-CoR nuclear receptor corepressor clearance from target genes such as IL1B and NOS2. Involved in the TLR9-mediated protective mechanism in intestinal inflammation. Plays a anti-inflammatory role in liver inflammation; proposed to inhibit pro-inflammatory (but not antiapoptotic) NF-kappa-B signaling. Activates transcription of IBAP and SDC1. In Mus musculus (Mouse), this protein is Bile acid receptor (Nr1h4).